A 454-amino-acid chain; its full sequence is Probable tRNA methyltransferase 9B (454 aa).

Serine 214 is modified (phosphoserine).

Belongs to the methyltransferase superfamily. Down-regulated in breast, bladder, colorectal, cervix and testicular carcinomas.

In terms of biological role, may modify wobble uridines in specific arginine and glutamic acid tRNAs. Acts as a tumor suppressor by promoting the expression of LIN9. This Homo sapiens (Human) protein is Probable tRNA methyltransferase 9B.